A 64-amino-acid chain; its full sequence is uncharacterized protein (64 aa).

Helical transmembrane passes span 4 to 24 and 35 to 55; these read IYQYFSLLSFTFSLYFGWLAY and MYLNVSYCALFLSVMVFTFGM.

It localises to the cell membrane. This is an uncharacterized protein from Bacillus subtilis (strain 168).